The chain runs to 242 residues: 7-cyano-7-deazaguanine synthase (242 aa).

A disordered region spans residues 1–25 (MNSRKDKNSKGKNSDTKRKKSSQEN). ATP is bound at residue 32–42 (LSGGLDSTTCL). Zn(2+) is bound by residues Cys-212, Cys-221, Cys-224, and Cys-227.

The protein belongs to the QueC family. Zn(2+) is required as a cofactor.

The enzyme catalyses 7-carboxy-7-deazaguanine + NH4(+) + ATP = 7-cyano-7-deazaguanine + ADP + phosphate + H2O + H(+). It functions in the pathway purine metabolism; 7-cyano-7-deazaguanine biosynthesis. Its function is as follows. Catalyzes the ATP-dependent conversion of 7-carboxy-7-deazaguanine (CDG) to 7-cyano-7-deazaguanine (preQ(0)). The polypeptide is 7-cyano-7-deazaguanine synthase (Leptospira borgpetersenii serovar Hardjo-bovis (strain JB197)).